The chain runs to 593 residues: Numb-related protein 1 (593 aa).

4 disordered regions span residues methionine 1 to aspartate 97, threonine 235 to serine 278, leucine 331 to glutamine 375, and methionine 493 to aspartate 581. The residue at position 17 (serine 17) is a Phosphoserine; by PKC. Residues glutamine 27–serine 37 show a composition bias toward polar residues. Basic residues predominate over residues arginine 64–aspartate 74. Serine 65 bears the Phosphoserine; by PKC mark. One can recognise a PID domain in the interval arginine 102–isoleucine 255. 3 stretches are compositionally biased toward polar residues: residues alanine 236–proline 251, glutamate 261–serine 278, and serine 354–glutamate 364. Residues methionine 493 to serine 511 are compositionally biased toward low complexity. Residues serine 516–proline 528 are compositionally biased toward pro residues. Positions alanine 532 to asparagine 565 are enriched in polar residues.

Interacts with pkc-3. Expressed in cells comprising the intestine, pharyngeal cells, the anal sphincter and depressor muscles.

It is found in the cytoplasm. Its subcellular location is the cell cortex. It localises to the cytoskeleton. The protein localises to the membrane. Its function is as follows. Involved in the tethering and targeting of pkc-3 to modulate the intracellular distribution of the kinase. The complex formed with pkc-3 complexes are likely to be involved in assembly, maintenance, and/or regulation of protein complexes that execute asymmetric and/or polarized cell functions. The protein is Numb-related protein 1 of Caenorhabditis elegans.